The sequence spans 256 residues: Small ribosomal subunit protein eS1A (256 aa).

Ala2 is subject to N-acetylalanine; partial.

The protein belongs to the eukaryotic ribosomal protein eS1 family. In terms of assembly, component of the small ribosomal subunit. Mature ribosomes consist of a small (40S) and a large (60S) subunit. The 40S subunit contains about 33 different proteins and 1 molecule of RNA (18S). The 60S subunit contains about 49 different proteins and 3 molecules of RNA (25S, 5.8S and 5S).

The protein localises to the cytoplasm. The chain is Small ribosomal subunit protein eS1A from Clavispora lusitaniae (strain ATCC 42720) (Yeast).